The sequence spans 605 residues: Aspartate--tRNA(Asp/Asn) ligase (605 aa).

Glu183 contributes to the L-aspartate binding site. Residues Gln207 to Lys210 are aspartate. Arg229 is a binding site for L-aspartate. ATP contacts are provided by residues Arg229–Glu231 and Gln238. An L-aspartate-binding site is contributed by His456. An ATP-binding site is contributed by Glu490. Arg497 is an L-aspartate binding site. ATP is bound at residue Gly542 to Arg545.

It belongs to the class-II aminoacyl-tRNA synthetase family. Type 1 subfamily. Homodimer.

It localises to the cytoplasm. It catalyses the reaction tRNA(Asx) + L-aspartate + ATP = L-aspartyl-tRNA(Asx) + AMP + diphosphate. Functionally, aspartyl-tRNA synthetase with relaxed tRNA specificity since it is able to aspartylate not only its cognate tRNA(Asp) but also tRNA(Asn). Reaction proceeds in two steps: L-aspartate is first activated by ATP to form Asp-AMP and then transferred to the acceptor end of tRNA(Asp/Asn). The chain is Aspartate--tRNA(Asp/Asn) ligase from Heliobacterium modesticaldum (strain ATCC 51547 / Ice1).